Consider the following 120-residue polypeptide: NAD(P)H-quinone oxidoreductase subunit 3, chloroplastic (120 aa).

Helical transmembrane passes span phenylalanine 10–valine 30, methionine 64–methionine 84, and valine 88–leucine 108.

Belongs to the complex I subunit 3 family. As to quaternary structure, NDH is composed of at least 16 different subunits, 5 of which are encoded in the nucleus.

The protein localises to the plastid. Its subcellular location is the chloroplast thylakoid membrane. It carries out the reaction a plastoquinone + NADH + (n+1) H(+)(in) = a plastoquinol + NAD(+) + n H(+)(out). The catalysed reaction is a plastoquinone + NADPH + (n+1) H(+)(in) = a plastoquinol + NADP(+) + n H(+)(out). NDH shuttles electrons from NAD(P)H:plastoquinone, via FMN and iron-sulfur (Fe-S) centers, to quinones in the photosynthetic chain and possibly in a chloroplast respiratory chain. The immediate electron acceptor for the enzyme in this species is believed to be plastoquinone. Couples the redox reaction to proton translocation, and thus conserves the redox energy in a proton gradient. The polypeptide is NAD(P)H-quinone oxidoreductase subunit 3, chloroplastic (Ipomoea purpurea (Common morning glory)).